The sequence spans 1015 residues: Beta-galactosidase (1015 aa).

The active-site Proton donor is E434. The Nucleophile role is filled by E513.

This sequence belongs to the glycosyl hydrolase 2 family. Requires Mg(2+) as cofactor. Mn(2+) serves as cofactor.

The catalysed reaction is Hydrolysis of terminal non-reducing beta-D-galactose residues in beta-D-galactosides.. In Arthrobacter sp. (strain B7), this protein is Beta-galactosidase (lacZ).